A 374-amino-acid polypeptide reads, in one-letter code: Arf-GAP with dual PH domain-containing protein 1 (374 aa).

In terms of domain architecture, Arf-GAP spans arginine 7–proline 126. A C4-type zinc finger spans residues cysteine 21–cysteine 44. Serine 87 is subject to Phosphoserine; by PKC. PH domains follow at residues alanine 129–phenylalanine 230 and asparagine 252–aspartate 356. Lysine 272 carries the post-translational modification N6-acetyllysine. Threonine 276 is modified (phosphothreonine; by PKC).

In terms of assembly, interacts with PRKCA, PRKCI and PRKCZ. Interacts with the N-terminal region of PRKD1. In terms of processing, phosphorylated by PRKCA, PRKCI, PRKCZ and PRKD1 in vitro. Expressed at highest levels in brain and at lower levels in peripheral blood leukocytes.

The protein resides in the nucleus. Its subcellular location is the cytoplasm. Functionally, GTPase-activating protein for the ADP ribosylation factor family. Binds phosphatidylinositol 3,4,5-trisphosphate (PtdInsP3) and inositol 1,3,4,5-tetrakisphosphate (InsP4). Regulates the incorporation of CD63 and CD9 into multivesicular bodies. The chain is Arf-GAP with dual PH domain-containing protein 1 (ADAP1) from Homo sapiens (Human).